The sequence spans 338 residues: Phosphate transport system permease protein PstC 1 (338 aa).

The next 8 membrane-spanning stretches (helical) occupy residues 19-39 (GGIGAVIPLLALVLVLVVLVI), 93-113 (TSAIALIIAVPVSVGAALVIV), 123-143 (AVGIVLELLAGIPSVVVGLWG), 144-164 (AMTFGPFIAHHIAPVIAHNAP), 181-201 (GMLVSGLVLAVMVVPIIATTT), 232-252 (LPWVSSGIVGAVVLGLGRALG), 254-274 (TMAVAMVSGAVLGAMPANIYA), and 295-315 (TNFAVKTLAEVGLVLMVITLL). Residues 87–320 (IVGTLATSAI…VITLLTNVAA (234 aa)) enclose the ABC transmembrane type-1 domain.

It belongs to the binding-protein-dependent transport system permease family. CysTW subfamily.

Its subcellular location is the cell membrane. Functionally, part of the binding-protein-dependent transport system for phosphate; probably responsible for the translocation of the substrate across the membrane. The sequence is that of Phosphate transport system permease protein PstC 1 (pstC1) from Mycobacterium bovis (strain ATCC BAA-935 / AF2122/97).